We begin with the raw amino-acid sequence, 107 residues long: Nucleoid-associated protein Daro_0807 (107 aa).

The protein belongs to the YbaB/EbfC family. Homodimer.

The protein localises to the cytoplasm. The protein resides in the nucleoid. Binds to DNA and alters its conformation. May be involved in regulation of gene expression, nucleoid organization and DNA protection. This chain is Nucleoid-associated protein Daro_0807, found in Dechloromonas aromatica (strain RCB).